The following is a 112-amino-acid chain: MCGGCVQQEYPDRGSTCLETGSYLLNYVSCVQCNKRDFVLIVNKTAAEEDGEEIITYDHMCKNCHHVIAKHEYTFSVVDDYQEYTMLCMLCGRAEDSVSVLPDDPRQMAPLF.

11 residues coordinate Zn(2+): cysteine 2, cysteine 5, cysteine 30, cysteine 33, histidine 59, cysteine 61, cysteine 64, histidine 66, histidine 71, cysteine 88, and cysteine 91.

This sequence belongs to the Churchill family.

Transcriptional activator that mediates FGF signaling during neural development. Plays a role in the regulation of cell movement. Does not bind DNA by itself. The chain is Protein Churchill (churc1) from Xenopus laevis (African clawed frog).